A 211-amino-acid polypeptide reads, in one-letter code: Thiamine-phosphate synthase (211 aa).

4-amino-2-methyl-5-(diphosphooxymethyl)pyrimidine is bound by residues 37–41 (QLRIK) and Asn-69. The Mg(2+) site is built by Asp-70 and Asp-89. Ser-108 provides a ligand contact to 4-amino-2-methyl-5-(diphosphooxymethyl)pyrimidine. Residue 134–136 (TQT) coordinates 2-[(2R,5Z)-2-carboxy-4-methylthiazol-5(2H)-ylidene]ethyl phosphate. Lys-137 is a binding site for 4-amino-2-methyl-5-(diphosphooxymethyl)pyrimidine. Residues Gly-166 and 186–187 (IS) contribute to the 2-[(2R,5Z)-2-carboxy-4-methylthiazol-5(2H)-ylidene]ethyl phosphate site.

This sequence belongs to the thiamine-phosphate synthase family. The cofactor is Mg(2+).

It carries out the reaction 2-[(2R,5Z)-2-carboxy-4-methylthiazol-5(2H)-ylidene]ethyl phosphate + 4-amino-2-methyl-5-(diphosphooxymethyl)pyrimidine + 2 H(+) = thiamine phosphate + CO2 + diphosphate. It catalyses the reaction 2-(2-carboxy-4-methylthiazol-5-yl)ethyl phosphate + 4-amino-2-methyl-5-(diphosphooxymethyl)pyrimidine + 2 H(+) = thiamine phosphate + CO2 + diphosphate. The enzyme catalyses 4-methyl-5-(2-phosphooxyethyl)-thiazole + 4-amino-2-methyl-5-(diphosphooxymethyl)pyrimidine + H(+) = thiamine phosphate + diphosphate. The protein operates within cofactor biosynthesis; thiamine diphosphate biosynthesis; thiamine phosphate from 4-amino-2-methyl-5-diphosphomethylpyrimidine and 4-methyl-5-(2-phosphoethyl)-thiazole: step 1/1. Functionally, condenses 4-methyl-5-(beta-hydroxyethyl)thiazole monophosphate (THZ-P) and 2-methyl-4-amino-5-hydroxymethyl pyrimidine pyrophosphate (HMP-PP) to form thiamine monophosphate (TMP). In Shigella boydii serotype 4 (strain Sb227), this protein is Thiamine-phosphate synthase.